The sequence spans 399 residues: Imidazolonepropionase (399 aa).

Fe(3+)-binding residues include His74 and His76. His74 and His76 together coordinate Zn(2+). The 4-imidazolone-5-propanoate site is built by Arg83, Tyr146, and His176. Tyr146 provides a ligand contact to N-formimidoyl-L-glutamate. His238 serves as a coordination point for Fe(3+). His238 provides a ligand contact to Zn(2+). Gln241 contributes to the 4-imidazolone-5-propanoate binding site. Asp312 provides a ligand contact to Fe(3+). Residue Asp312 coordinates Zn(2+). N-formimidoyl-L-glutamate is bound by residues Asn314 and Gly316. Ser317 contacts 4-imidazolone-5-propanoate.

This sequence belongs to the metallo-dependent hydrolases superfamily. HutI family. The cofactor is Zn(2+). Requires Fe(3+) as cofactor.

It localises to the cytoplasm. It catalyses the reaction 4-imidazolone-5-propanoate + H2O = N-formimidoyl-L-glutamate. The protein operates within amino-acid degradation; L-histidine degradation into L-glutamate; N-formimidoyl-L-glutamate from L-histidine: step 3/3. Functionally, catalyzes the hydrolytic cleavage of the carbon-nitrogen bond in imidazolone-5-propanoate to yield N-formimidoyl-L-glutamate. It is the third step in the universal histidine degradation pathway. The polypeptide is Imidazolonepropionase (Deinococcus deserti (strain DSM 17065 / CIP 109153 / LMG 22923 / VCD115)).